A 137-amino-acid polypeptide reads, in one-letter code: NADH-quinone oxidoreductase subunit A 2 (137 aa).

Transmembrane regions (helical) follow at residues 12–32, 66–86, and 95–115; these read WGFA…LGVS, FYLV…LFAW, and WAGL…LVYL.

Belongs to the complex I subunit 3 family. As to quaternary structure, NDH-1 is composed of 13 different subunits. Subunits NuoA, H, J, K, L, M, N constitute the membrane sector of the complex.

It is found in the cell inner membrane. The catalysed reaction is a quinone + NADH + 5 H(+)(in) = a quinol + NAD(+) + 4 H(+)(out). Its function is as follows. NDH-1 shuttles electrons from NADH, via FMN and iron-sulfur (Fe-S) centers, to quinones in the respiratory chain. The immediate electron acceptor for the enzyme in this species is believed to be ubiquinone. Couples the redox reaction to proton translocation (for every two electrons transferred, four hydrogen ions are translocated across the cytoplasmic membrane), and thus conserves the redox energy in a proton gradient. This chain is NADH-quinone oxidoreductase subunit A 2, found in Pseudomonas aeruginosa (strain ATCC 15692 / DSM 22644 / CIP 104116 / JCM 14847 / LMG 12228 / 1C / PRS 101 / PAO1).